We begin with the raw amino-acid sequence, 336 residues long: Glyceraldehyde-3-phosphate dehydrogenase, plasmid (336 aa).

NAD(+) is bound by residues 12–13 (RI), Asp-37, Arg-81, and Ser-123. Residues 154–156 (SCT) and Thr-185 each bind D-glyceraldehyde 3-phosphate. Residue Cys-155 is the Nucleophile of the active site. Residue Asn-186 participates in NAD(+) binding. Residues Arg-200, 213–214 (TG), and Arg-236 each bind D-glyceraldehyde 3-phosphate. Residue Asn-317 coordinates NAD(+).

This sequence belongs to the glyceraldehyde-3-phosphate dehydrogenase family. In terms of assembly, homotetramer.

The enzyme catalyses D-glyceraldehyde 3-phosphate + phosphate + NAD(+) = (2R)-3-phospho-glyceroyl phosphate + NADH + H(+). Its pathway is carbohydrate biosynthesis; Calvin cycle. Could be involved in carbon fixation as a component of the Calvin cycle. Catalyzes the oxidative phosphorylation of glyceraldehyde 3-phosphate (G3P) to 1,3-bisphosphoglycerate (BPG) using the cofactor NAD. The first reaction step involves the formation of a hemiacetal intermediate between G3P and a cysteine residue, and this hemiacetal intermediate is then oxidized to a thioester, with concomitant reduction of NAD to NADH. The reduced NADH is then exchanged with the second NAD, and the thioester is attacked by a nucleophilic inorganic phosphate to produce BPG. The protein is Glyceraldehyde-3-phosphate dehydrogenase, plasmid (cbbGP) of Cupriavidus necator (strain ATCC 17699 / DSM 428 / KCTC 22496 / NCIMB 10442 / H16 / Stanier 337) (Ralstonia eutropha).